The following is a 1687-amino-acid chain: Muscle calcium channel subunit alpha-1 (1687 aa).

The disordered stretch occupies residues 1 to 33; the sequence is MDDAVCPTETDNVQNKQKATTPKRTQRRGGKQQ. Topologically, residues 1-61 are cytoplasmic; that stretch reads MDDAVCPTET…IFCIKIVDSK (61 aa). Over residues 9-23 the composition is skewed to polar residues; sequence ETDNVQNKQKATTPK. An I repeat occupies 48–330; that stretch reads NPLRIFCIKI…LILGVLSGEF (283 aa). The chain crosses the membrane as a helical span at residues 62 to 80; it reads LFEYFILLTIFANCVALAV. Residues 81–99 lie on the Extracellular side of the membrane; it reads YTPYPSGDSNITNQMLEKI. An N-linked (GlcNAc...) asparagine glycan is attached at asparagine 90. A helical transmembrane segment spans residues 100-117; that stretch reads EYIFLVIFTSECVMKIIA. Topologically, residues 118–130 are cytoplasmic; that stretch reads YGFVLHTGSYLRN. A helical transmembrane segment spans residues 131–145; it reads GWNFLDFFIVVIGMI. Over 146–157 the chain is Extracellular; that stretch reads STALSNLVKEGF. A helical membrane pass occupies residues 158-176; it reads DVKALRAFRVLRPLRLVSG. Residues 177-196 are Cytoplasmic-facing; it reads VPSLQVVLNSILKAMIPLLH. The chain crosses the membrane as a helical span at residues 197 to 216; that stretch reads IALLVLFVIIIYAIIGLELF. Topologically, residues 217 to 302 are extracellular; sequence SGKLHKTCRH…SIQDAMGSSW (86 aa). A Ca(2+)-binding site is contributed by glutamate 285. A helical transmembrane segment spans residues 303 to 327; the sequence is EWIYFVSMVILGAFFVMNLILGVLS. The Cytoplasmic portion of the chain corresponds to 328 to 434; that stretch reads GEFSKERTKA…RACRKAVKSQ (107 aa). An II repeat occupies 420–667; sequence NRRIRRACRK…VFLAIAVDNL (248 aa). A helical membrane pass occupies residues 435–454; it reads AFYWLIILLVFLNTGVLATE. Residues 455–467 lie on the Extracellular side of the membrane; it reads HYRQPIWLDQFQE. A helical transmembrane segment spans residues 468–487; the sequence is YTNIFFIALFTCEMILKMYS. Over 488–496 the chain is Cytoplasmic; that stretch reads LGFQGYFVS. Residues 497–515 form a helical membrane-spanning segment; it reads LFNRFDCFVVIGSISEMVL. Over 516-525 the chain is Extracellular; the sequence is TSSELMAPLG. The helical transmembrane segment at 526–544 threads the bilayer; the sequence is VSVLRCVRLLRVFKVTKYW. Residues 545–563 are Cytoplasmic-facing; it reads HSLSNLVASLLNSIQSIAS. Residues 564-583 traverse the membrane as a helical segment; it reads LLLLLFLFIVIFGLLGMQVF. The Extracellular segment spans residues 584–639; sequence GGRFTFKPEEEKPRSNFDSFYQSLLTVFQILTGEDWNVVMYDGIRAYGGVFSFGIV. Residue glutamate 617 coordinates Ca(2+). A helical membrane pass occupies residues 640–664; that stretch reads ACIYYIILFICGNYILLNVFLAIAV. The Cytoplasmic portion of the chain corresponds to 665–785; the sequence is DNLADADSLS…TNRFRIFCHR (121 aa). The stretch at 777 to 1059 is one III repeat; that stretch reads NRFRIFCHRL…IFVGFVIVTF (283 aa). A helical transmembrane segment spans residues 786–809; the sequence is LCNHSNFGNFILCCIMFSSAMLAA. The Extracellular segment spans residues 810-826; it reads ENPLKADASRNIVLNKF. The chain crosses the membrane as a helical span at residues 827–846; the sequence is DYFFTAVFTIELVLKLISYG. Residues 847 to 854 are Cytoplasmic-facing; the sequence is FVLHDGAF. The helical transmembrane segment at 855–877 threads the bilayer; that stretch reads CRSAFNLLDLLVVCVSLISIFFN. The Extracellular segment spans residues 878 to 885; it reads SNAISVVK. Residues 886–900 traverse the membrane as a helical segment; the sequence is ILRVLRVLRPLRAIN. Over 901-921 the chain is Cytoplasmic; sequence RAKGLKHVVQCVIVAVKTIGN. Residues 922–941 traverse the membrane as a helical segment; it reads IVLVTCLLQFMFAVIGVQLF. Residues 942-1030 lie on the Extracellular side of the membrane; the sequence is KGKFFSCSDG…NGGPIYNFRP (89 aa). A dihydropyridine binding region spans residues 979-1068; it reads REWKNNKFHF…FQNEGEQEYK (90 aa). Residue glutamate 1005 participates in Ca(2+) binding. Residues 1031 to 1055 traverse the membrane as a helical segment; sequence IVAAYYIIYIIIIAFFMVNIFVGFV. Topologically, residues 1056-1110 are cytoplasmic; the sequence is IVTFQNEGEQEYKNCELDKNQRNCIEFALKAKPVRRYIPKHSIQYKVWWFVTSSS. An IV repeat occupies 1096 to 1370; the sequence is HSIQYKVWWF…LFVAVIMDNF (275 aa). Residues 1111 to 1129 form a helical membrane-spanning segment; sequence FEYSIFVLIMINTVTLAMK. The Extracellular portion of the chain corresponds to 1130–1143; it reads FYKQPEYYSEILDA. The helical transmembrane segment at 1144–1163 threads the bilayer; that stretch reads LNMIFTAVFSLEFIFKLAAF. At 1164–1172 the chain is on the cytoplasmic side; it reads RFKNYFGDA. A helical transmembrane segment spans residues 1173 to 1191; it reads WNTFDFIIVLGSFIDIVYS. Over 1192 to 1219 the chain is Extracellular; the sequence is EIKTKEQALATCDGQSCNKAKGGSTLIS. A helical transmembrane segment spans residues 1220 to 1238; the sequence is INFFRLFRVMRLVKLLSKG. The Cytoplasmic segment spans residues 1239-1257; that stretch reads EGIRTLLWTFIKSFQALPY. A helical membrane pass occupies residues 1258 to 1277; sequence VALLIVMLFFIYAVIGMQVF. Topologically, residues 1278 to 1343 are extracellular; that stretch reads GKIMLEEGTS…AVNNCGSSIA (66 aa). The segment at 1327–1389 is dihydropyridine binding; sequence KCDPESDAVN…LGPHHLDEFI (63 aa). Positions 1337 to 1378 are phenylalkylamine binding; it reads NCGSSIAFPYFISFYVLCSFLIINLFVAVIMDNFDYLTRDWS. A helical membrane pass occupies residues 1344–1362; that stretch reads FPYFISFYVLCSFLIINLF. Topologically, residues 1363 to 1687 are cytoplasmic; sequence VAVIMDNFDY…PKSKDKDEEF (325 aa).

The protein belongs to the calcium channel alpha-1 subunit (TC 1.A.1.11) family. In terms of tissue distribution, predominantly expressed in the larval body wall musculature. In adults, highest expression in thorax followed by head and at a lower extent by abdomen.

It is found in the membrane. In terms of biological role, voltage-sensitive calcium channels (VSCC) mediate the entry of calcium ions into excitable cells and are also involved in a variety of calcium-dependent processes, including muscle contraction, hormone or neurotransmitter release, gene expression, cell motility, cell division and cell death. MDL-alpha1 encodes a dihydropyridine- and diltiazem-sensitive current in larval body wall muscle. This Musca domestica (House fly) protein is Muscle calcium channel subunit alpha-1.